The chain runs to 335 residues: DNA-directed RNA polymerase subunit alpha (335 aa).

The segment at 1–233 (MVREKIRVST…DLLIPFLHAE (233 aa)) is alpha N-terminal domain (alpha-NTD). Residues 263 to 335 (KKKIALKFIF…HFVIDLKNKR (73 aa)) form an alpha C-terminal domain (alpha-CTD) region.

It belongs to the RNA polymerase alpha chain family. In terms of assembly, in plastids the minimal PEP RNA polymerase catalytic core is composed of four subunits: alpha, beta, beta', and beta''. When a (nuclear-encoded) sigma factor is associated with the core the holoenzyme is formed, which can initiate transcription.

The protein resides in the plastid. It localises to the chloroplast. The enzyme catalyses RNA(n) + a ribonucleoside 5'-triphosphate = RNA(n+1) + diphosphate. DNA-dependent RNA polymerase catalyzes the transcription of DNA into RNA using the four ribonucleoside triphosphates as substrates. The sequence is that of DNA-directed RNA polymerase subunit alpha from Spinacia oleracea (Spinach).